We begin with the raw amino-acid sequence, 396 residues long: 1-deoxy-D-xylulose 5-phosphate reductoisomerase (396 aa).

NADPH contacts are provided by threonine 15, glycine 16, serine 17, isoleucine 18, glycine 41, and asparagine 129. Residue lysine 130 participates in 1-deoxy-D-xylulose 5-phosphate binding. NADPH is bound at residue glutamate 131. Residue aspartate 155 participates in Mn(2+) binding. 1-deoxy-D-xylulose 5-phosphate-binding residues include serine 156, glutamate 157, serine 182, and histidine 205. Glutamate 157 serves as a coordination point for Mn(2+). Glycine 211 contributes to the NADPH binding site. 1-deoxy-D-xylulose 5-phosphate-binding residues include serine 218, asparagine 223, lysine 224, and glutamate 227. Glutamate 227 is a Mn(2+) binding site.

It belongs to the DXR family. The cofactor is Mg(2+). Requires Mn(2+) as cofactor.

It carries out the reaction 2-C-methyl-D-erythritol 4-phosphate + NADP(+) = 1-deoxy-D-xylulose 5-phosphate + NADPH + H(+). The protein operates within isoprenoid biosynthesis; isopentenyl diphosphate biosynthesis via DXP pathway; isopentenyl diphosphate from 1-deoxy-D-xylulose 5-phosphate: step 1/6. Its function is as follows. Catalyzes the NADPH-dependent rearrangement and reduction of 1-deoxy-D-xylulose-5-phosphate (DXP) to 2-C-methyl-D-erythritol 4-phosphate (MEP). The sequence is that of 1-deoxy-D-xylulose 5-phosphate reductoisomerase from Xanthomonas campestris pv. campestris (strain B100).